A 402-amino-acid polypeptide reads, in one-letter code: APO protein 3, mitochondrial (402 aa).

Residues 1 to 13 (MQRRKLVEISIFV) constitute a mitochondrion transit peptide. The disordered stretch occupies residues 37–59 (NDEDPLYADVPKPPKDKSERKPY). Over residues 48 to 58 (KPPKDKSERKP) the composition is skewed to basic and acidic residues. APO domains are found at residues 127–213 (RCRL…DLEK) and 294–380 (TCGY…PVPD).

It belongs to the APO family.

The protein resides in the mitochondrion. Its function is as follows. May be involved in the stable assembly of several 4Fe-4S cluster-containing complexes of mitochondria. The sequence is that of APO protein 3, mitochondrial (APO3) from Arabidopsis thaliana (Mouse-ear cress).